A 563-amino-acid polypeptide reads, in one-letter code: Mitochondrial distribution and morphology protein 34 (563 aa).

The SMP-LTD domain maps to 1-195; the sequence is MAFNFNWSPL…LPAIIHRLSL (195 aa). Disordered regions lie at residues 298-499 and 531-563; these read ERGD…PHTP and ARRQ…PKAL. 2 stretches are compositionally biased toward polar residues: residues 303–332 and 346–357; these read AGTT…FSNR and SLVNMNSATTGL. The segment covering 365 to 383 has biased composition (basic residues); that stretch reads SRSHPTRKKKNRVVNLRKP. Low complexity predominate over residues 386–407; the sequence is TESSESGESETASTTAVSEPTV. 2 stretches are compositionally biased toward polar residues: residues 458–471 and 478–488; these read PSLT…INTQ and YNQSASTSYTP. The span at 531 to 540 shows a compositional bias: basic and acidic residues; it reads ARRQHDDKTA.

This sequence belongs to the MDM34 family. Component of the ER-mitochondria encounter structure (ERMES) or MDM complex, composed of MMM1, MDM10, MDM12 and MDM34.

It is found in the mitochondrion outer membrane. Functionally, component of the ERMES/MDM complex, which serves as a molecular tether to connect the endoplasmic reticulum (ER) and mitochondria. Components of this complex are involved in the control of mitochondrial shape and protein biogenesis, and function in nonvesicular lipid trafficking between the ER and mitochondria. MDM34 is required for the interaction of the ER-resident membrane protein MMM1 and the outer mitochondrial membrane-resident beta-barrel protein MDM10. This Botryotinia fuckeliana (strain B05.10) (Noble rot fungus) protein is Mitochondrial distribution and morphology protein 34.